Reading from the N-terminus, the 357-residue chain is Neuronal-specific septin-3 (357 aa).

The segment covering 1–10 has biased composition (basic and acidic residues); it reads MSKGLPETRT. The tract at residues 1–29 is disordered; the sequence is MSKGLPETRTDAAMSELVPEPRPKPAVPM. In terms of domain architecture, Septin-type G spans 58-330; the sequence is TGFDFNIMVV…ETYRAKRLND (273 aa). Residues 68–75 form a G1 motif region; that stretch reads GQSGLGKS. Position 68–75 (68–75) interacts with GTP; the sequence is GQSGLGKS. At S91 the chain carries Phosphoserine. GTP is bound at residue T102. A G3 motif region spans residues 125–128; it reads DTPG. The segment at 207–210 is G4 motif; that stretch reads AKAD. GTP is bound by residues 208–216, G264, and R279; that span reads KADTMTLEE.

It belongs to the TRAFAC class TrmE-Era-EngA-EngB-Septin-like GTPase superfamily. Septin GTPase family. In terms of assembly, septins polymerize into heterooligomeric protein complexes that form filaments, and can associate with cellular membranes, actin filaments and microtubules. GTPase activity is required for filament formation. In terms of processing, phosphorylated by PKG on serine residues. Phosphorylated by PKG on Ser-91.

The protein localises to the cytoplasm. The protein resides in the cytoskeleton. It is found in the synapse. Functionally, filament-forming cytoskeletal GTPase. May play a role in cytokinesis (Potential). The polypeptide is Neuronal-specific septin-3 (Bos taurus (Bovine)).